A 538-amino-acid polypeptide reads, in one-letter code: Syncytin-2 (538 aa).

The N-terminal stretch at 1–15 (MGLLLLVLILTPLLA) is a signal peptide. Over 31-478 (LLQSTGSPYS…GWLNWEGTWK (448 aa)) the chain is Extracellular. Residues 43–46 (CWLC) carry the CXXC motif. Intrachain disulfides connect Cys-43-Cys-46, Cys-43-Cys-439, and Cys-431-Cys-438. N-linked (GlcNAc...) asparagine glycans are attached at residues Asn-133, Asn-146, Asn-177, Asn-220, Asn-241, Asn-247, Asn-312, and Asn-332. Residues 354-374 (FIPLLAGLGILAGTGTGIAGI) form a fusion peptide region. The short motif at 414–430 (LQNRRGLDMLTAAQGGI) is the CKS-17 element. The short motif at 431–439 (CLALDEKCC) is the CX6CC element. Asn-443 carries N-linked (GlcNAc...) asparagine glycosylation. A helical transmembrane segment spans residues 479–499 (WFSWVLPFIGPFVSLLLLLLF). At 500-538 (GPCLLNLITQFVSSRLQAIKLQTNLSAGRRPRTIQESPF) the chain is on the cytoplasmic side.

This sequence belongs to the gamma type-C retroviral envelope protein family. HERV class-I FRD env subfamily. The surface and transmembrane proteins form a heterodimer. They are attached by non-covalent interactions or by a labile interchain disulfide bond. In terms of processing, specific enzymatic cleavages in vivo yield the mature SU and TM proteins. The CXXC motif is highly conserved across a broad range of retroviral envelope proteins. It is thought to participate in the formation of a labile disulfide bond possibly with the CX6CC motif present in the transmembrane protein.

The protein localises to the cell membrane. This endogenous retroviral envelope protein has retained its original fusogenic properties and participates in trophoblast fusion and the formation of a syncytium during placenta morphogenesis. The interaction with MFSD2A is apparently important for this process. In terms of biological role, endogenous envelope proteins may have kept, lost or modified their original function during evolution and this one is unable to confer infectivity. The protein is Syncytin-2 (ERVFRD-1) of Hylobates moloch (Silvery gibbon).